The chain runs to 354 residues: Uroporphyrinogen decarboxylase (354 aa).

Substrate contacts are provided by residues 27–31 (RQAGR), Asp77, Tyr154, Ser209, and His327.

The protein belongs to the uroporphyrinogen decarboxylase family. As to quaternary structure, homodimer.

The protein localises to the cytoplasm. It catalyses the reaction uroporphyrinogen III + 4 H(+) = coproporphyrinogen III + 4 CO2. The protein operates within porphyrin-containing compound metabolism; protoporphyrin-IX biosynthesis; coproporphyrinogen-III from 5-aminolevulinate: step 4/4. Functionally, catalyzes the decarboxylation of four acetate groups of uroporphyrinogen-III to yield coproporphyrinogen-III. The polypeptide is Uroporphyrinogen decarboxylase (Shewanella putrefaciens (strain CN-32 / ATCC BAA-453)).